The following is a 137-amino-acid chain: Putative pre-16S rRNA nuclease (137 aa).

The protein belongs to the YqgF nuclease family.

The protein localises to the cytoplasm. Its function is as follows. Could be a nuclease involved in processing of the 5'-end of pre-16S rRNA. In Anaeromyxobacter dehalogenans (strain 2CP-1 / ATCC BAA-258), this protein is Putative pre-16S rRNA nuclease.